The chain runs to 201 residues: Dephospho-CoA kinase (201 aa).

The 199-residue stretch at 3–201 folds into the DPCK domain; sequence IIGLTGGMAA…ALLHRLREAS (199 aa). 11-16 serves as a coordination point for ATP; sequence AAGKST.

The protein belongs to the CoaE family.

It localises to the cytoplasm. The enzyme catalyses 3'-dephospho-CoA + ATP = ADP + CoA + H(+). Its pathway is cofactor biosynthesis; coenzyme A biosynthesis; CoA from (R)-pantothenate: step 5/5. Catalyzes the phosphorylation of the 3'-hydroxyl group of dephosphocoenzyme A to form coenzyme A. The polypeptide is Dephospho-CoA kinase (Gluconobacter oxydans (strain 621H) (Gluconobacter suboxydans)).